We begin with the raw amino-acid sequence, 316 residues long: 4-hydroxy-3-methylbut-2-enyl diphosphate reductase (316 aa).

Position 12 (Cys-12) interacts with [4Fe-4S] cluster. (2E)-4-hydroxy-3-methylbut-2-enyl diphosphate contacts are provided by His-41 and His-74. Dimethylallyl diphosphate-binding residues include His-41 and His-74. Isopentenyl diphosphate contacts are provided by His-41 and His-74. Residue Cys-96 participates in [4Fe-4S] cluster binding. His-124 contributes to the (2E)-4-hydroxy-3-methylbut-2-enyl diphosphate binding site. Position 124 (His-124) interacts with dimethylallyl diphosphate. His-124 provides a ligand contact to isopentenyl diphosphate. Glu-126 acts as the Proton donor in catalysis. Position 167 (Thr-167) interacts with (2E)-4-hydroxy-3-methylbut-2-enyl diphosphate. Cys-197 contacts [4Fe-4S] cluster. Residues Ser-225, Ser-226, Asn-227, and Ser-269 each contribute to the (2E)-4-hydroxy-3-methylbut-2-enyl diphosphate site. Ser-225, Ser-226, Asn-227, and Ser-269 together coordinate dimethylallyl diphosphate. 4 residues coordinate isopentenyl diphosphate: Ser-225, Ser-226, Asn-227, and Ser-269.

The protein belongs to the IspH family. As to quaternary structure, homodimer. [4Fe-4S] cluster is required as a cofactor.

The catalysed reaction is isopentenyl diphosphate + 2 oxidized [2Fe-2S]-[ferredoxin] + H2O = (2E)-4-hydroxy-3-methylbut-2-enyl diphosphate + 2 reduced [2Fe-2S]-[ferredoxin] + 2 H(+). It carries out the reaction dimethylallyl diphosphate + 2 oxidized [2Fe-2S]-[ferredoxin] + H2O = (2E)-4-hydroxy-3-methylbut-2-enyl diphosphate + 2 reduced [2Fe-2S]-[ferredoxin] + 2 H(+). The protein operates within isoprenoid biosynthesis; dimethylallyl diphosphate biosynthesis; dimethylallyl diphosphate from (2E)-4-hydroxy-3-methylbutenyl diphosphate: step 1/1. It participates in isoprenoid biosynthesis; isopentenyl diphosphate biosynthesis via DXP pathway; isopentenyl diphosphate from 1-deoxy-D-xylulose 5-phosphate: step 6/6. In terms of biological role, catalyzes the conversion of 1-hydroxy-2-methyl-2-(E)-butenyl 4-diphosphate (HMBPP) into a mixture of isopentenyl diphosphate (IPP) and dimethylallyl diphosphate (DMAPP). Acts in the terminal step of the DOXP/MEP pathway for isoprenoid precursor biosynthesis. This is 4-hydroxy-3-methylbut-2-enyl diphosphate reductase from Salmonella agona (strain SL483).